The sequence spans 373 residues: Exonuclease V (373 aa).

Cys-92 is a binding site for [4Fe-4S] cluster. The Mg(2+) site is built by Asp-182 and Glu-196. The [4Fe-4S] cluster site is built by Cys-343, Cys-346, and Cys-352.

It belongs to the EXO5 family. Monomer; monomeric form has weak exonuclease activity. Homodimer; homodimeric form is unsure but has much higher exonuclease activity, suggesting that it could homodimerize upon DNA-binding. Interacts with the replication protein A (RPA) complex. [4Fe-4S] cluster serves as cofactor. Mg(2+) is required as a cofactor.

Its subcellular location is the nucleus. It localises to the cytoplasm. The protein localises to the cytosol. In terms of biological role, single-stranded DNA (ssDNA) bidirectional exonuclease involved in DNA repair. Probably involved in DNA repair following ultraviolet (UV) irradiation and interstrand cross-links (ICLs) damage. Has both 5'-3' and 3'-5' exonuclease activities with a strong preference for 5'-ends. Acts as a sliding exonuclease that loads at ssDNA ends and then slides along the ssDNA prior to cutting; however the sliding and the 3'-5' exonuclease activities are abolished upon binding to the replication protein A (RPA) complex that enforces 5'-directionality activity. This Homo sapiens (Human) protein is Exonuclease V (EXO5).